The following is a 271-amino-acid chain: 4-hydroxy-tetrahydrodipicolinate reductase (271 aa).

NAD(+)-binding positions include 11–16 (GGSGRM) and E37. Residue R38 coordinates NADP(+). Residues 101-103 (GTT) and 125-128 (APNM) each bind NAD(+). H158 functions as the Proton donor/acceptor in the catalytic mechanism. A (S)-2,3,4,5-tetrahydrodipicolinate-binding site is contributed by H159. The active-site Proton donor is the K162. 168 to 169 (GT) provides a ligand contact to (S)-2,3,4,5-tetrahydrodipicolinate.

Belongs to the DapB family.

Its subcellular location is the cytoplasm. The catalysed reaction is (S)-2,3,4,5-tetrahydrodipicolinate + NAD(+) + H2O = (2S,4S)-4-hydroxy-2,3,4,5-tetrahydrodipicolinate + NADH + H(+). The enzyme catalyses (S)-2,3,4,5-tetrahydrodipicolinate + NADP(+) + H2O = (2S,4S)-4-hydroxy-2,3,4,5-tetrahydrodipicolinate + NADPH + H(+). It functions in the pathway amino-acid biosynthesis; L-lysine biosynthesis via DAP pathway; (S)-tetrahydrodipicolinate from L-aspartate: step 4/4. Its function is as follows. Catalyzes the conversion of 4-hydroxy-tetrahydrodipicolinate (HTPA) to tetrahydrodipicolinate. In Shewanella loihica (strain ATCC BAA-1088 / PV-4), this protein is 4-hydroxy-tetrahydrodipicolinate reductase.